The following is a 1676-amino-acid chain: Anucleate primary sterigmata protein A (1676 aa).

Polar residues predominate over residues 1-11 (MEDSQRGNASM). The disordered stretch occupies residues 1–35 (MEDSQRGNASMMSMMDDPFVVSPEGARDPPSTNQY). Positions 51–127 (AQAKRALEAH…EIGQETARAF (77 aa)) form a coiled coil. Disordered stretches follow at residues 160–180 (QATN…NQSN), 353–394 (RLRQ…TPRH), 439–712 (DEVE…SRRP), 1027–1050 (GTST…PVEP), 1176–1201 (PLGA…DQGA), 1220–1270 (VRPL…QASS), and 1297–1354 (PASA…RRSS). Positions 163–172 (NSPSKVSVPS) are enriched in low complexity. Coiled coils occupy residues 193–359 (TSLL…QQEA) and 408–453 (HAHR…AANG). 5 stretches are compositionally biased toward basic and acidic residues: residues 355–370 (RQQE…RPHD), 439–448 (DEVEQRRRDS), 461–470 (TKAETRKPAR), 479–489 (KKAEVEIHDSD), and 503–522 (ASND…RSDA). Low complexity predominate over residues 593-602 (SYYSTASTSA). Positions 609-620 (DPGTPSISQFST) are enriched in polar residues. Basic residues predominate over residues 623–636 (YRLRKKRSVLRKIR). The segment covering 647 to 664 (SRPSSARESPSTSFTRDT) has biased composition (polar residues). Acidic residues predominate over residues 678–687 (AEVDGDEDDF). Positions 1032–1042 (TVEFSVSSISS) are enriched in low complexity. Residues 1191-1201 (SGSSNQADQGA) are compositionally biased toward polar residues. Residues 1314–1341 (RASSQQRPRTPNESALQVGSAKTTTSRA) show a composition bias toward polar residues. In terms of domain architecture, PH spans 1393 to 1504 (QTMIGEFLWK…WFNALSYLLV (112 aa)). Acidic residues predominate over residues 1511–1524 (EEAENGVTLDDIDE). Disordered stretches follow at residues 1511-1589 (EEAE…QASS) and 1654-1676 (HDVS…HSHH). Polar residues-rich tracts occupy residues 1534-1548 (RQTA…QSRG) and 1580-1589 (YSDQARQASS).

It localises to the membrane. Required for nuclear positioning and completion of asexual development. The protein is Anucleate primary sterigmata protein A (apsA) of Emericella nidulans (strain FGSC A4 / ATCC 38163 / CBS 112.46 / NRRL 194 / M139) (Aspergillus nidulans).